Here is a 229-residue protein sequence, read N- to C-terminus: Prolactin (229 aa).

Residues M1–S30 form the signal peptide. C34 and C41 form a disulfide bridge. S56, S64, and S120 each carry phosphoserine. Disulfide bonds link C88-C204 and C221-C229.

This sequence belongs to the somatotropin/prolactin family. As to quaternary structure, interacts with PRLR.

The protein resides in the secreted. In terms of biological role, prolactin acts primarily on the mammary gland by promoting lactation. This is Prolactin (PRL) from Ailuropoda melanoleuca (Giant panda).